Consider the following 201-residue polypeptide: MYRAGVTLLVVAVVSFGRWDSVTVATTIRVGWWYEPQVKMAYIYEHNDTNLTIFCNTTAYDSPFLASGMMIVLPHRTQFLTRKVNYSEDMENIKQNYTHQLTHMLTGEPGTYVNGSVTCWGSNGTFGAGTFIVRSMVNKTAGNTNTFIHFVEDSELVENPAYFRRSDHRAFMIVILTQVVFVVFIINASFIWSWTFRRHKR.

The signal sequence occupies residues M1–A25. The Extracellular portion of the chain corresponds to T26–A170. N-linked (GlcNAc...) asparagine; by host glycans are attached at residues N47, N50, N56, N85, N96, N114, N123, and N138. Residues F171 to I191 form a helical membrane-spanning segment. Residues W192–R201 are Cytoplasmic-facing.

This sequence belongs to the HHV-5 UL120 protein family.

The protein resides in the host membrane. The protein is Membrane protein UL120 (UL120) of Human cytomegalovirus (strain Merlin) (HHV-5).